A 192-amino-acid chain; its full sequence is Shikimate kinase (192 aa).

26 to 31 (ASGKSS) is a binding site for ATP. Mg(2+) is bound at residue Ser-30. Substrate-binding residues include Asp-48, Arg-72, and Gly-94. Arg-132 serves as a coordination point for ATP. Residue Arg-151 participates in substrate binding.

Belongs to the shikimate kinase family. In terms of assembly, monomer. The cofactor is Mg(2+).

The protein localises to the cytoplasm. It catalyses the reaction shikimate + ATP = 3-phosphoshikimate + ADP + H(+). It participates in metabolic intermediate biosynthesis; chorismate biosynthesis; chorismate from D-erythrose 4-phosphate and phosphoenolpyruvate: step 5/7. Catalyzes the specific phosphorylation of the 3-hydroxyl group of shikimic acid using ATP as a cosubstrate. This Prochlorococcus marinus (strain MIT 9313) protein is Shikimate kinase.